The following is a 167-amino-acid chain: Lipoprotein signal peptidase (167 aa).

Helical transmembrane passes span 8-28, 61-81, and 93-113; these read FFLL…YWIM, FSHW…LWLW, and FGLT…ICFY. Catalysis depends on residues D117 and D136. The chain crosses the membrane as a helical span at residues 126-146; that stretch reads IFYFAVFNLADTFITLGVIAI.

This sequence belongs to the peptidase A8 family.

Its subcellular location is the cell inner membrane. It carries out the reaction Release of signal peptides from bacterial membrane prolipoproteins. Hydrolyzes -Xaa-Yaa-Zaa-|-(S,diacylglyceryl)Cys-, in which Xaa is hydrophobic (preferably Leu), and Yaa (Ala or Ser) and Zaa (Gly or Ala) have small, neutral side chains.. It functions in the pathway protein modification; lipoprotein biosynthesis (signal peptide cleavage). Functionally, this protein specifically catalyzes the removal of signal peptides from prolipoproteins. This chain is Lipoprotein signal peptidase, found in Bartonella quintana (strain Toulouse) (Rochalimaea quintana).